The chain runs to 537 residues: CWF19-like protein 1 (537 aa).

The tract at residues 297–323 is disordered; the sequence is KQGRKRPSTGRDTRPPHAKQPRKPPQP.

The protein belongs to the CWF19 family.

This Mus musculus (Mouse) protein is CWF19-like protein 1 (Cwf19l1).